The chain runs to 335 residues: Nicotinate-nucleotide--dimethylbenzimidazole phosphoribosyltransferase (335 aa).

Catalysis depends on Glu-304, which acts as the Proton acceptor.

This sequence belongs to the CobT family.

The catalysed reaction is 5,6-dimethylbenzimidazole + nicotinate beta-D-ribonucleotide = alpha-ribazole 5'-phosphate + nicotinate + H(+). It participates in nucleoside biosynthesis; alpha-ribazole biosynthesis; alpha-ribazole from 5,6-dimethylbenzimidazole: step 1/2. Its function is as follows. Catalyzes the synthesis of alpha-ribazole-5'-phosphate from nicotinate mononucleotide (NAMN) and 5,6-dimethylbenzimidazole (DMB). This Thermus thermophilus (strain ATCC 27634 / DSM 579 / HB8) protein is Nicotinate-nucleotide--dimethylbenzimidazole phosphoribosyltransferase.